Consider the following 131-residue polypeptide: Aspartate 1-decarboxylase (131 aa).

Ser25 acts as the Schiff-base intermediate with substrate; via pyruvic acid in catalysis. Ser25 is subject to Pyruvic acid (Ser). Residue Thr57 participates in substrate binding. Tyr58 acts as the Proton donor in catalysis. 73–75 (GAA) contacts substrate.

This sequence belongs to the PanD family. Heterooctamer of four alpha and four beta subunits. Pyruvate serves as cofactor. Post-translationally, is synthesized initially as an inactive proenzyme, which is activated by self-cleavage at a specific serine bond to produce a beta-subunit with a hydroxyl group at its C-terminus and an alpha-subunit with a pyruvoyl group at its N-terminus.

The protein resides in the cytoplasm. The catalysed reaction is L-aspartate + H(+) = beta-alanine + CO2. It participates in cofactor biosynthesis; (R)-pantothenate biosynthesis; beta-alanine from L-aspartate: step 1/1. In terms of biological role, catalyzes the pyruvoyl-dependent decarboxylation of aspartate to produce beta-alanine. In Anaeromyxobacter sp. (strain Fw109-5), this protein is Aspartate 1-decarboxylase.